A 150-amino-acid polypeptide reads, in one-letter code: Large ribosomal subunit protein bL9 (150 aa).

The protein belongs to the bacterial ribosomal protein bL9 family.

In terms of biological role, binds to the 23S rRNA. This Aromatoleum aromaticum (strain DSM 19018 / LMG 30748 / EbN1) (Azoarcus sp. (strain EbN1)) protein is Large ribosomal subunit protein bL9.